The chain runs to 198 residues: Probable GTP-binding protein EngB (198 aa).

Positions 22 to 195 constitute an EngB-type G domain; sequence DLPEIALAGR…WKAIHKFTKT (174 aa). Residues 30-37, 57-61, 75-78, 142-145, and 174-176 contribute to the GTP site; these read GRSNVGKS, GKTQT, DVPG, TKAD, and FSS. Positions 37 and 59 each coordinate Mg(2+).

It belongs to the TRAFAC class TrmE-Era-EngA-EngB-Septin-like GTPase superfamily. EngB GTPase family. The cofactor is Mg(2+).

Its function is as follows. Necessary for normal cell division and for the maintenance of normal septation. The protein is Probable GTP-binding protein EngB of Bacillus anthracis (strain A0248).